Consider the following 300-residue polypeptide: MPSLTMTDSSYIGRFAPTPSGFLHFGSLVAALASWLDARAVNGRWLLRMEDTDPPREMPGARDAILQTLERYGLHWDGEVVFQSQRHDAYAAVVDRLFNMGLAYACTCSRKQLESYNGIYPGFCRNAGHAREGAAIRLRVPELIYRFTDRVQGEYQQHLGREVGDFVIQRRDGLYAYQLAVVLDDAWQGVTDIVRGADLLDNTPRQLYLQELLGFSQPRYLHIPLIVQPDGHKLGKSYRSPPLQAEHATPLLLRALRALGQETDPELLLATPAEVLAVARAQWRPEAIAQRTTVPEADLR.

L-glutamate contacts are provided by residues 14–18 (RFAPT) and Glu-50. Residues 17 to 27 (PTPSGFLHFGS) carry the 'HIGH' region motif. Zn(2+)-binding residues include Cys-106, Cys-108, Tyr-120, and Cys-124. L-glutamate contacts are provided by Tyr-177 and Arg-195. Positions 233 to 237 (KLGKS) match the 'KMSKS' region motif. Residue Lys-236 coordinates ATP.

Belongs to the class-I aminoacyl-tRNA synthetase family. GluQ subfamily. Zn(2+) is required as a cofactor.

In terms of biological role, catalyzes the tRNA-independent activation of glutamate in presence of ATP and the subsequent transfer of glutamate onto a tRNA(Asp). Glutamate is transferred on the 2-amino-5-(4,5-dihydroxy-2-cyclopenten-1-yl) moiety of the queuosine in the wobble position of the QUC anticodon. The chain is Glutamyl-Q tRNA(Asp) synthetase from Pseudomonas putida (strain ATCC 47054 / DSM 6125 / CFBP 8728 / NCIMB 11950 / KT2440).